A 148-amino-acid chain; its full sequence is MFDVTLLILLGLAALGFISHNTTVAVSILVLIIVRVTPLNTFFPWIEKQGLTVGIIILTIGVMAPIASGTLPSSTLLHSFENWKSLVAIAVGVFVSWLGGRGVALMGNQPQLVAGLLVGTVLGVALFRGVPVGPLIAAGLVSLIVGRQ.

Transmembrane regions (helical) follow at residues 14–34 (ALGF…LIIV), 51–71 (LTVG…SGTL), 86–106 (LVAI…VALM), and 121–141 (VLGV…AGLV).

This sequence belongs to the UPF0756 family.

Its subcellular location is the cell membrane. This chain is UPF0756 membrane protein YeaL, found in Salmonella arizonae (strain ATCC BAA-731 / CDC346-86 / RSK2980).